A 631-amino-acid chain; its full sequence is Methanol dehydrogenase [cytochrome c] subunit 1 (631 aa).

The first 32 residues, 1 to 32 (MNRNTPKARGASSLAMAVAMGLAVLTTAPATA), serve as a signal peptide directing secretion. A disulfide bridge links Cys135 with Cys136. Residues Glu209 and Asn293 each coordinate Ca(2+). The active-site Proton acceptor is Asp335. A disulfide bridge links Cys418 with Cys447.

Belongs to the bacterial PQQ dehydrogenase family. In terms of assembly, heterotetramer composed of 2 alpha and 2 beta subunits. It depends on pyrroloquinoline quinone as a cofactor. Requires Ca(2+) as cofactor.

The protein localises to the periplasm. The catalysed reaction is 2 Fe(III)-[cytochrome cL] + a primary alcohol = 2 Fe(II)-[cytochrome cL] + an aldehyde + 2 H(+). Catalyzes the oxidation of primary alcohols including methanol. This is Methanol dehydrogenase [cytochrome c] subunit 1 (moxF) from Paracoccus denitrificans.